The sequence spans 468 residues: uncharacterized protein (468 aa).

A disordered region spans residues 1 to 22 (MVKRSSHRQVVLDEDDEENYNN). An RING-type zinc finger spans residues 85-123 (CPICTEALQRPFTTHCGHTYCYECLLNWLKESKSCPTCR). Residues 386–402 (DSLNSSSNNSPSHNNIH) are compositionally biased toward low complexity. The segment at 386 to 468 (DSLNSSSNNS…TIQLDSDEES (83 aa)) is disordered. Residues 417-434 (IVTNGTGLRSSQSSSQNR) are compositionally biased toward polar residues.

The protein localises to the nucleus. This is an uncharacterized protein from Schizosaccharomyces pombe (strain 972 / ATCC 24843) (Fission yeast).